We begin with the raw amino-acid sequence, 525 residues long: Peptide chain release factor 3 (525 aa).

One can recognise a tr-type G domain in the interval 9 to 276; sequence AKRRTFAIIS…GFTRYAPAPQ (268 aa). GTP-binding positions include 18–25, 86–90, and 140–143; these read SHPDAGKT, DTPGH, and NKFD.

This sequence belongs to the TRAFAC class translation factor GTPase superfamily. Classic translation factor GTPase family. PrfC subfamily.

Its subcellular location is the cytoplasm. Functionally, increases the formation of ribosomal termination complexes and stimulates activities of RF-1 and RF-2. It binds guanine nucleotides and has strong preference for UGA stop codons. It may interact directly with the ribosome. The stimulation of RF-1 and RF-2 is significantly reduced by GTP and GDP, but not by GMP. The chain is Peptide chain release factor 3 from Francisella tularensis subsp. novicida (strain U112).